Here is a 192-residue protein sequence, read N- to C-terminus: MNKRDYMNTSVQEPPLDYSFRSIHVIQDLVNEEPRTGLRPLKRSKSGKSLTQSLWLNNNVLNDLRDFNQVASQLLEHPENLAWIDLSFNDLTSIDPVLTTFFNLSVLYLHGNSIQHLGEVNKLAVLPRLRSLTLHGNPMEEEKGYRQYVLCTLPHITTFDFSGVTKADRTTAEVWKRMNIKPKKARIKQNTL.

LRR repeat units follow at residues 49–71 (SLTQ…NQVA), 80–101 (NLAW…LTTF), and 103–124 (NLSV…NKLA). The LRRCT domain occupies 137–175 (NPMEEEKGYRQYVLCTLPHITTFDFSGVTKADRTTAEVW).

It localises to the cytoplasm. The chain is Leucine-rich repeat-containing protein 51 from Macaca mulatta (Rhesus macaque).